Reading from the N-terminus, the 711-residue chain is Polyribonucleotide nucleotidyltransferase (711 aa).

Mg(2+)-binding residues include Asp-486 and Asp-492. The KH domain occupies 553-612 (PRIHTIKINPDKIKDVIGKGGSVIRALTEETGTTIEIEDDGTVKIAATDGEKAKHAIRRI). An S1 motif domain is found at 622–690 (GRVYTGKVTR…RQGRIRLSIK (69 aa)). Residues 689 to 711 (IKEATEQSQPAAAPEAPAAEQGE) are disordered. The segment covering 694–711 (EQSQPAAAPEAPAAEQGE) has biased composition (low complexity).

Belongs to the polyribonucleotide nucleotidyltransferase family. In terms of assembly, component of the RNA degradosome, which is a multiprotein complex involved in RNA processing and mRNA degradation. Mg(2+) serves as cofactor.

Its subcellular location is the cytoplasm. It catalyses the reaction RNA(n+1) + phosphate = RNA(n) + a ribonucleoside 5'-diphosphate. Its function is as follows. Involved in mRNA degradation. Catalyzes the phosphorolysis of single-stranded polyribonucleotides processively in the 3'- to 5'-direction. The chain is Polyribonucleotide nucleotidyltransferase from Escherichia coli (strain SE11).